A 1239-amino-acid polypeptide reads, in one-letter code: Zinc finger and BTB domain-containing protein 40 (1239 aa).

The 64-residue stretch at 24–87 (CDCTISIGTI…MYTGKLPVGK (64 aa)) folds into the BTB domain. 3 disordered regions span residues 130–231 (SAPS…TSTE), 687–732 (HLEA…PDPA), and 779–801 (KELD…PKKK). Residues 136 to 145 (TFRKEPEKPQ) show a composition bias toward basic and acidic residues. Over residues 181-199 (SVSQEMSVNSPTAQESQRN) the composition is skewed to polar residues. Phosphoserine is present on Ser190. A compositionally biased stretch (low complexity) spans 200 to 212 (AETPAETPTTAEA). Basic and acidic residues predominate over residues 687 to 703 (HLEANNKEDEKAAKEDS). Position 703 is a phosphoserine (Ser703). Over residues 705–719 (PGEQNDQGETGSLPG) the composition is skewed to polar residues. 10 consecutive C2H2-type zinc fingers follow at residues 807–830 (VTCD…LTEH), 836–858 (FSCE…LRLH), 864–887 (FMCK…KKKH), 893–915 (YACQ…VRTH), 921–944 (YVCR…HTFH), 950–973 (YDCK…HEVH), 978–1000 (HPCP…VVTH), 1006–1029 (FSCG…RTHH), 1046–1069 (LQCS…KAEH), and 1075–1098 (HECD…KCQH). Lys1066 participates in a covalent cross-link: Glycyl lysine isopeptide (Lys-Gly) (interchain with G-Cter in SUMO2). A C2H2-type 11; atypical zinc finger spans residues 1104 to 1127 (FRCLYCAATFRFPGALQHHVTTEH). A C2H2-type 12 zinc finger spans residues 1135 to 1158 (FPCELCGELFTSQAQLDSHLESEH).

The protein belongs to the krueppel C2H2-type zinc-finger protein family.

It is found in the nucleus. May be involved in transcriptional regulation. The chain is Zinc finger and BTB domain-containing protein 40 (ZBTB40) from Homo sapiens (Human).